Consider the following 186-residue polypeptide: MVLLAGTANRRELAVERAAKKEAVESLNGLFQTTSVAIVAHYSGLTVAQMQKLRQQMKQAGASVKVSKNRLAKIALEGTDVAAIGPLLKGPTVIATSSDPVAAPKVAVEFAKANEKFVILGGSMGTTVLNVDGVKALASLPSLDELRAKLVGLVQAPATKIAQVTTAPAAKLARVVQAYASKSEAA.

As to quaternary structure, part of the ribosomal stalk of the 50S ribosomal subunit. The N-terminus interacts with L11 and the large rRNA to form the base of the stalk. The C-terminus forms an elongated spine to which L12 dimers bind in a sequential fashion forming a multimeric L10(L12)X complex.

Functionally, forms part of the ribosomal stalk, playing a central role in the interaction of the ribosome with GTP-bound translation factors. This is Large ribosomal subunit protein uL10 from Rhodopseudomonas palustris (strain ATCC BAA-98 / CGA009).